The chain runs to 120 residues: NAD(P)H-quinone oxidoreductase subunit 3, chloroplastic (120 aa).

The next 3 membrane-spanning stretches (helical) occupy residues 10-30 (FLVF…ASKL), 64-84 (MFAL…PWAV), and 89-109 (MGFI…VGLV).

Belongs to the complex I subunit 3 family. NDH is composed of at least 16 different subunits, 5 of which are encoded in the nucleus.

It localises to the plastid. The protein resides in the chloroplast thylakoid membrane. The catalysed reaction is a plastoquinone + NADH + (n+1) H(+)(in) = a plastoquinol + NAD(+) + n H(+)(out). It carries out the reaction a plastoquinone + NADPH + (n+1) H(+)(in) = a plastoquinol + NADP(+) + n H(+)(out). NDH shuttles electrons from NAD(P)H:plastoquinone, via FMN and iron-sulfur (Fe-S) centers, to quinones in the photosynthetic chain and possibly in a chloroplast respiratory chain. The immediate electron acceptor for the enzyme in this species is believed to be plastoquinone. Couples the redox reaction to proton translocation, and thus conserves the redox energy in a proton gradient. This is NAD(P)H-quinone oxidoreductase subunit 3, chloroplastic from Chlorokybus atmophyticus (Soil alga).